Consider the following 334-residue polypeptide: Glycerol-3-phosphate dehydrogenase [NAD(P)+] (334 aa).

NADPH contacts are provided by W13, R33, and K106. Sn-glycerol 3-phosphate-binding residues include K106, G137, and S139. Residue A141 participates in NADPH binding. Sn-glycerol 3-phosphate is bound by residues K192, D245, S255, R256, and N257. K192 serves as the catalytic Proton acceptor. Position 256 (R256) interacts with NADPH. The NADPH site is built by V280 and E282.

This sequence belongs to the NAD-dependent glycerol-3-phosphate dehydrogenase family.

It is found in the cytoplasm. It catalyses the reaction sn-glycerol 3-phosphate + NAD(+) = dihydroxyacetone phosphate + NADH + H(+). The enzyme catalyses sn-glycerol 3-phosphate + NADP(+) = dihydroxyacetone phosphate + NADPH + H(+). The protein operates within membrane lipid metabolism; glycerophospholipid metabolism. Catalyzes the reduction of the glycolytic intermediate dihydroxyacetone phosphate (DHAP) to sn-glycerol 3-phosphate (G3P), the key precursor for phospholipid synthesis. The sequence is that of Glycerol-3-phosphate dehydrogenase [NAD(P)+] from Chlamydia abortus (strain DSM 27085 / S26/3) (Chlamydophila abortus).